The following is a 352-amino-acid chain: DNA integrity scanning protein DisA (352 aa).

Residues 3–143 enclose the DAC domain; the sequence is PQELIEKIKL…NYKYVVNQVD (141 aa). Residues G71, L89, and 102–106 each bind ATP; that span reads TRHRT.

Belongs to the DisA family. Homooctamer. Mg(2+) is required as a cofactor.

It carries out the reaction 2 ATP = 3',3'-c-di-AMP + 2 diphosphate. In terms of biological role, participates in a DNA-damage check-point. DisA forms globular foci that rapidly scan along the chromosomes searching for lesions. Its function is as follows. Also has diadenylate cyclase activity, catalyzing the condensation of 2 ATP molecules into cyclic di-AMP (c-di-AMP). c-di-AMP likely acts as a signaling molecule that may couple DNA integrity with a cellular process. The chain is DNA integrity scanning protein DisA from Thermotoga petrophila (strain ATCC BAA-488 / DSM 13995 / JCM 10881 / RKU-1).